Reading from the N-terminus, the 210-residue chain is Redox-sensing transcriptional repressor Rex (210 aa).

Positions 17–56 form a DNA-binding region, H-T-H motif; that stretch reads KYHRYLNELMKNDVDRISSKELGEKIGFTASQIRQDLNCF. 91–96 contacts NAD(+); that stretch reads GAGNIG.

Belongs to the transcriptional regulatory Rex family. As to quaternary structure, homodimer.

It is found in the cytoplasm. Its function is as follows. Modulates transcription in response to changes in cellular NADH/NAD(+) redox state. The polypeptide is Redox-sensing transcriptional repressor Rex (Clostridium botulinum (strain Eklund 17B / Type B)).